The sequence spans 279 residues: Elongation factor Ts (279 aa).

The interval 80–83 is involved in Mg(2+) ion dislocation from EF-Tu; it reads TDFV.

The protein belongs to the EF-Ts family.

Its subcellular location is the cytoplasm. Its function is as follows. Associates with the EF-Tu.GDP complex and induces the exchange of GDP to GTP. It remains bound to the aminoacyl-tRNA.EF-Tu.GTP complex up to the GTP hydrolysis stage on the ribosome. The chain is Elongation factor Ts from Borreliella burgdorferi (strain ZS7) (Borrelia burgdorferi).